Here is a 657-residue protein sequence, read N- to C-terminus: tRNA 5-methylaminomethyl-2-thiouridine biosynthesis bifunctional protein MnmC (657 aa).

Positions 1–236 (MPDRLVPATL…KRAMLVGEYA (236 aa)) are tRNA (mnm(5)s(2)U34)-methyltransferase. The tract at residues 261–657 (IGAGVAGCAV…LRARQVSAAD (397 aa)) is FAD-dependent cmnm(5)s(2)U34 oxidoreductase.

This sequence in the N-terminal section; belongs to the methyltransferase superfamily. tRNA (mnm(5)s(2)U34)-methyltransferase family. In the C-terminal section; belongs to the DAO family. FAD is required as a cofactor.

It is found in the cytoplasm. It carries out the reaction 5-aminomethyl-2-thiouridine(34) in tRNA + S-adenosyl-L-methionine = 5-methylaminomethyl-2-thiouridine(34) in tRNA + S-adenosyl-L-homocysteine + H(+). In terms of biological role, catalyzes the last two steps in the biosynthesis of 5-methylaminomethyl-2-thiouridine (mnm(5)s(2)U) at the wobble position (U34) in tRNA. Catalyzes the FAD-dependent demodification of cmnm(5)s(2)U34 to nm(5)s(2)U34, followed by the transfer of a methyl group from S-adenosyl-L-methionine to nm(5)s(2)U34, to form mnm(5)s(2)U34. This is tRNA 5-methylaminomethyl-2-thiouridine biosynthesis bifunctional protein MnmC from Burkholderia multivorans (strain ATCC 17616 / 249).